The sequence spans 138 residues: Putative pre-16S rRNA nuclease (138 aa).

This sequence belongs to the YqgF nuclease family.

Its subcellular location is the cytoplasm. Its function is as follows. Could be a nuclease involved in processing of the 5'-end of pre-16S rRNA. This is Putative pre-16S rRNA nuclease from Geobacillus sp. (strain WCH70).